Consider the following 141-residue polypeptide: Protein stum homolog (141 aa).

Ser-26 bears the Phosphoserine mark. The next 2 membrane-spanning stretches (helical) occupy residues 51–71 and 87–107; these read FPVA…GTFV and RHVC…VLTA.

Belongs to the SPEC3 family. Stum subfamily.

Its subcellular location is the membrane. This chain is Protein stum homolog, found in Mus musculus (Mouse).